Consider the following 809-residue polypeptide: Cell division control protein 48 homolog A (809 aa).

Ser-2 is modified (N-acetylserine). Ser-41 carries the post-translational modification Phosphoserine. ADP is bound by residues Gly-210, 248 to 256, and His-387; that span reads GPPGSGKTL. 521–529 lines the ATP pocket; the sequence is GPPGCGKTL. A disordered region spans residues 782–809; the sequence is AGSGATTGVADPFATSAAAAGDDDDLYN. Residues 791–801 are compositionally biased toward low complexity; that stretch reads ADPFATSAAAA.

The protein belongs to the AAA ATPase family. Homohexamer. Interacts with SERK1, GRF6, KAPP and SYP31, but not with KNOLLE. Component of the SERK1 signaling complex, composed of KAPP, CDC48A, GRF6 or GRF7, SERK1, SERK2, SERK3/BAK1 and BRI1. Interacts with PUX1, PUX2, PUX3, PUX4, PUX5, PUX7 and PUX11 via its N-terminus. Phosphorylated on at least one threonine residue and on Ser-41 by SERK1.

Its subcellular location is the nucleus. The protein localises to the cytoplasm. It localises to the cytoskeleton. The protein resides in the phragmoplast. It is found in the cell membrane. Its function is as follows. Probably functions in cell division and growth processes. Interacts with certain SNAREs as part of specialized membrane fusion events where vesicles from the same organelle fuse (homotypic fusion). In Arabidopsis thaliana (Mouse-ear cress), this protein is Cell division control protein 48 homolog A (CDC48A).